Consider the following 219-residue polypeptide: Ribosomal RNA small subunit methyltransferase G (219 aa).

Residues glycine 78, phenylalanine 83, 129–130 (GE), and arginine 146 each bind S-adenosyl-L-methionine.

This sequence belongs to the methyltransferase superfamily. RNA methyltransferase RsmG family.

Its subcellular location is the cytoplasm. The catalysed reaction is guanosine(527) in 16S rRNA + S-adenosyl-L-methionine = N(7)-methylguanosine(527) in 16S rRNA + S-adenosyl-L-homocysteine. Specifically methylates the N7 position of guanine in position 527 of 16S rRNA. This is Ribosomal RNA small subunit methyltransferase G from Geotalea uraniireducens (strain Rf4) (Geobacter uraniireducens).